Consider the following 142-residue polypeptide: MASKLLLEIVTPDRKVLSQEVDYVGAPGIEGEFGIMANHIPFLSALGVGNLYFKEGNRTHYIFVSGGFAEVGNNKVTILAEVAEKAVEIDIARAQKAQEKAKARLAKAQDRIESARAQAALQRALARLTCKDAAQKAGTTTH.

The protein belongs to the ATPase epsilon chain family. In terms of assembly, F-type ATPases have 2 components, CF(1) - the catalytic core - and CF(0) - the membrane proton channel. CF(1) has five subunits: alpha(3), beta(3), gamma(1), delta(1), epsilon(1). CF(0) has three main subunits: a, b and c.

It is found in the cell inner membrane. Functionally, produces ATP from ADP in the presence of a proton gradient across the membrane. This is ATP synthase epsilon chain from Maridesulfovibrio salexigens (strain ATCC 14822 / DSM 2638 / NCIMB 8403 / VKM B-1763) (Desulfovibrio salexigens).